A 218-amino-acid polypeptide reads, in one-letter code: MDVFDKVYSDDNNSYDQKTVSQRIEALFLNNLGKVVTRQQIIRAATDPKTGKQPENWHQRLSELRTDKGYTILSWRDMKVLAPQEYIMPHATRRPKAAKRVLPTKETWEQVLDRANYSCEWQEDGQHCGLVEGDIDPIGGGTVKLTPDHMTPHSIDPATDVNDPKMWQALCGRHQVMKKNYWDSNNGKINVIGILQSVNEKQKNDALEFLLNYYGLKR.

It carries out the reaction Endonucleolytic cleavage of DNA to give specific double-stranded fragments with terminal 5'-phosphates.. A P subtype restriction enzyme that recognizes the double-stranded sequence 5'-GGTACC-3' and cleaves after C-5. The chain is Type II restriction enzyme KpnI from Klebsiella pneumoniae.